A 445-amino-acid chain; its full sequence is Inward rectifier potassium channel 4 (445 aa).

Topologically, residues 1 to 55 are cytoplasmic; sequence MHGHSRNGQAHVPRRKRRNRFVKKNGQCNVYFANLSNKSQRYMADIFTTCVDTRW. Residues 56-80 form a helical membrane-spanning segment; it reads RYMLMIFSAAFLVSWLFFGLLFWCI. The Extracellular portion of the chain corresponds to 81-120; the sequence is AFFHGDLEASPGVPAAGGPAAGGGGAAPVAPKPCIMHVNG. Positions 91 to 111 are val/Gly/Ala/Pro stretch; the sequence is PGVPAAGGPAAGGGGAAPVAP. The helical; Pore-forming intramembrane region spans 121 to 132; that stretch reads FLGAFLFSVETQ. An intramembrane region (pore-forming) is located at residues 133 to 139; the sequence is TTIGYGF. The Selectivity filter signature appears at 134 to 139; that stretch reads TIGYGF. Residues 140-148 lie on the Extracellular side of the membrane; it reads RCVTEECPL. Residues 149–170 traverse the membrane as a helical segment; sequence AVIAVVVQSIVGCVIDSFMIGT. At 171 to 445 the chain is on the cytoplasmic side; that stretch reads IMAKMARPKK…NISYRRESAI (275 aa). Positions 443-445 match the PDZ-binding motif; it reads SAI.

Belongs to the inward rectifier-type potassium channel (TC 1.A.2.1) family. KCNJ4 subfamily. As to quaternary structure, homomultimeric and heteromultimeric association with KCNJ2 and KCNJ12. Interacts with DLG2 and DLG4. Associates, via its PDZ-recognition domain, with a complex containing LIN7A, LIN7B, LIN7C, DLG1, CASK and APBA1. Interacts with TAX1BP3. TAX1BP3 competes with LIN7 family members for KCNJ4 binding. Heart, skeletal muscle, and several different brain regions including the hippocampus.

It is found in the cell membrane. The protein resides in the postsynaptic cell membrane. It localises to the cytoplasmic vesicle membrane. The enzyme catalyses K(+)(in) = K(+)(out). Its function is as follows. Inward rectifier potassium channels are characterized by a greater tendency to allow potassium to flow into the cell rather than out of it. Their voltage dependence is regulated by the concentration of extracellular potassium; as external potassium is raised, the voltage range of the channel opening shifts to more positive voltages. The inward rectification is mainly due to the blockage of outward current by internal magnesium. Can be blocked by extracellular barium and cesium. This is Inward rectifier potassium channel 4 (KCNJ4) from Homo sapiens (Human).